A 448-amino-acid chain; its full sequence is Glutamyl-tRNA reductase (448 aa).

Residues threonine 49–arginine 52, serine 109, glutamate 114–glutamine 116, and glutamine 120 contribute to the substrate site. Cysteine 50 serves as the catalytic Nucleophile. Glycine 189–serine 194 lines the NADP(+) pocket.

This sequence belongs to the glutamyl-tRNA reductase family. As to quaternary structure, homodimer.

The catalysed reaction is (S)-4-amino-5-oxopentanoate + tRNA(Glu) + NADP(+) = L-glutamyl-tRNA(Glu) + NADPH + H(+). The protein operates within porphyrin-containing compound metabolism; protoporphyrin-IX biosynthesis; 5-aminolevulinate from L-glutamyl-tRNA(Glu): step 1/2. In terms of biological role, catalyzes the NADPH-dependent reduction of glutamyl-tRNA(Glu) to glutamate 1-semialdehyde (GSA). The sequence is that of Glutamyl-tRNA reductase from Staphylococcus aureus (strain NCTC 8325 / PS 47).